The sequence spans 166 residues: PTS system glucose-specific EIIA component (166 aa).

A PTS EIIA type-1 domain is found at 34–138; it reads DPVFAQKMMG…SVISPIIITN (105 aa). Residues His-71 and His-86 each contribute to the Zn(2+) site. His-86 acts as the Tele-phosphohistidine intermediate; for EIIA activity in catalysis. The residue at position 86 (His-86) is a Phosphohistidine; by HPr.

As to quaternary structure, heterodimer with glycerol kinase (glpk). Zn(2+) serves as cofactor.

The protein localises to the cytoplasm. Functionally, the phosphoenolpyruvate-dependent sugar phosphotransferase system (sugar PTS), a major carbohydrate active transport system, catalyzes the phosphorylation of incoming sugar substrates concomitantly with their translocation across the cell membrane. The enzyme II complex composed of PtsG and Crr is involved in glucose transport. The chain is PTS system glucose-specific EIIA component (crr) from Staphylococcus aureus (strain MSSA476).